Consider the following 111-residue polypeptide: MKKIEAIIKPFKLDEVRSPSGVGLQGITVTEAKGFGRQKGHTELYRGAEYVVDFLPKVKVEVVLADENAEAVIEAIRKAAQTGRIGDGKIFVSNVEEVIRIRTGETGIDAI.

Tyr-50 is modified (O-UMP-tyrosine).

The protein belongs to the P(II) protein family. Homotrimer.

Functionally, in nitrogen-limiting conditions, when the ratio of Gln to 2-ketoglutarate decreases, P-II is uridylylated to P-II-UMP. P-II-UMP allows the deadenylation of glutamine synthetase (GS), thus activating the enzyme. Conversely, in nitrogen excess P-II is deuridylated and promotes the adenylation of GS. P-II indirectly controls the transcription of the GS gene (glnA). P-II prevents NR-II-catalyzed conversion of NR-I to NR-I-phosphate, the transcriptional activator of glnA. When P-II is uridylylated to P-II-UMP, these events are reversed. The polypeptide is Nitrogen regulatory protein P-II (glnB) (Rhizobium leguminosarum bv. viciae).